A 601-amino-acid chain; its full sequence is Glutathione-regulated potassium-efflux system protein KefB (601 aa).

13 helical membrane passes run S4–A24, I29–F49, E55–L75, I87–M107, A115–M135, V152–G172, H177–G197, F207–G227, L230–L250, G268–Y288, L291–L311, F326–S346, and A356–I376. The region spanning K400–T519 is the RCK N-terminal domain.

This sequence belongs to the monovalent cation:proton antiporter 2 (CPA2) transporter (TC 2.A.37) family. KefB subfamily. As to quaternary structure, interacts with the regulatory subunit KefG.

The protein resides in the cell inner membrane. In terms of biological role, pore-forming subunit of a potassium efflux system that confers protection against electrophiles. Catalyzes K(+)/H(+) antiport. The polypeptide is Glutathione-regulated potassium-efflux system protein KefB (Klebsiella pneumoniae subsp. pneumoniae (strain ATCC 700721 / MGH 78578)).